A 316-amino-acid chain; its full sequence is Transaldolase (316 aa).

The active-site Schiff-base intermediate with substrate is the lysine 127.

The protein belongs to the transaldolase family. Type 2 subfamily.

The protein localises to the cytoplasm. The catalysed reaction is D-sedoheptulose 7-phosphate + D-glyceraldehyde 3-phosphate = D-erythrose 4-phosphate + beta-D-fructose 6-phosphate. It functions in the pathway carbohydrate degradation; pentose phosphate pathway; D-glyceraldehyde 3-phosphate and beta-D-fructose 6-phosphate from D-ribose 5-phosphate and D-xylulose 5-phosphate (non-oxidative stage): step 2/3. Transaldolase is important for the balance of metabolites in the pentose-phosphate pathway. The sequence is that of Transaldolase (tal) from Helicobacter pylori (strain ATCC 700392 / 26695) (Campylobacter pylori).